The primary structure comprises 483 residues: MAYIEGNTGKWEYVIGLEIHAQISSKSKLFSGSSTIFAANPNSQVSYVDAAMPGMLPVLNKHCVHQAIKTGLGLKAKINKYSVFDRKNYFYADLPQGYQISQFYYPIVQNGTMEIPTSTGDLKTIRINRLHLEQDAGKSMHDQSPHYSFIDLNRAGIGLMEIVTEPDISSPEEAAEFVKKLRNLLRYIGSCDGDMEKGSMRCDANISVRRSGEPLGTRCEIKNINSIRNIIKAIEFEAKRQVDLLESGEEIIQETRLFNADSGETRTMRLKEEALDYRYFPDPDLLPLVISDELINELKANLPELPDQKIEKYTKEFSLSKYDAEVIVADESVAEYFEKAANECNPKMLTNWLTSELFGQLNKASIGINECKITPSNFAKLVKLIENDTISGKIAKTVFEIMFETGKAPDKIIEEKGLVQVSDNNVLNTVIDEVIAENPESVEGYRSGKDKLFGFFVGQVMKKTDGKANPTLVNQLLKEKLSS.

This sequence belongs to the GatB/GatE family. GatB subfamily. As to quaternary structure, heterotrimer of A, B and C subunits.

It carries out the reaction L-glutamyl-tRNA(Gln) + L-glutamine + ATP + H2O = L-glutaminyl-tRNA(Gln) + L-glutamate + ADP + phosphate + H(+). The enzyme catalyses L-aspartyl-tRNA(Asn) + L-glutamine + ATP + H2O = L-asparaginyl-tRNA(Asn) + L-glutamate + ADP + phosphate + 2 H(+). In terms of biological role, allows the formation of correctly charged Asn-tRNA(Asn) or Gln-tRNA(Gln) through the transamidation of misacylated Asp-tRNA(Asn) or Glu-tRNA(Gln) in organisms which lack either or both of asparaginyl-tRNA or glutaminyl-tRNA synthetases. The reaction takes place in the presence of glutamine and ATP through an activated phospho-Asp-tRNA(Asn) or phospho-Glu-tRNA(Gln). The chain is Aspartyl/glutamyl-tRNA(Asn/Gln) amidotransferase subunit B from Rickettsia rickettsii (strain Iowa).